A 127-amino-acid polypeptide reads, in one-letter code: Ribonuclease P protein component (127 aa).

It belongs to the RnpA family. Consists of a catalytic RNA component (M1 or rnpB) and a protein subunit.

It catalyses the reaction Endonucleolytic cleavage of RNA, removing 5'-extranucleotides from tRNA precursor.. RNaseP catalyzes the removal of the 5'-leader sequence from pre-tRNA to produce the mature 5'-terminus. It can also cleave other RNA substrates such as 4.5S RNA. The protein component plays an auxiliary but essential role in vivo by binding to the 5'-leader sequence and broadening the substrate specificity of the ribozyme. The sequence is that of Ribonuclease P protein component from Corynebacterium urealyticum (strain ATCC 43042 / DSM 7109).